A 439-amino-acid chain; its full sequence is Tol-Pal system protein TolB (439 aa).

The N-terminal stretch at 1-22 (MKKPLRWLAALTVLLLPLSALA) is a signal peptide.

Belongs to the TolB family. In terms of assembly, the Tol-Pal system is composed of five core proteins: the inner membrane proteins TolA, TolQ and TolR, the periplasmic protein TolB and the outer membrane protein Pal. They form a network linking the inner and outer membranes and the peptidoglycan layer.

It localises to the periplasm. Part of the Tol-Pal system, which plays a role in outer membrane invagination during cell division and is important for maintaining outer membrane integrity. The chain is Tol-Pal system protein TolB from Xanthomonas oryzae pv. oryzae (strain PXO99A).